We begin with the raw amino-acid sequence, 196 residues long: DnaA initiator-associating protein DiaA (196 aa).

Positions 34–196 (LVQSLLNGNK…DSTLFPHQDE (163 aa)) constitute an SIS domain.

Belongs to the SIS family. DiaA subfamily. In terms of assembly, homotetramer; dimer of dimers.

Required for the timely initiation of chromosomal replication via direct interactions with the DnaA initiator protein. The sequence is that of DnaA initiator-associating protein DiaA from Serratia proteamaculans (strain 568).